The following is a 430-amino-acid chain: Adenylosuccinate synthetase (430 aa).

GTP contacts are provided by residues 12-18 and 40-42; these read GDEGKGK and GHT. Residue Asp-13 is the Proton acceptor of the active site. Mg(2+) is bound by residues Asp-13 and Gly-40. IMP is bound by residues 13–16, 38–41, Thr-130, Arg-144, Gln-224, Thr-239, and Arg-303; these read DEGK and NAGH. His-41 functions as the Proton donor in the catalytic mechanism. 299 to 305 is a binding site for substrate; that stretch reads VVTGRKR. GTP is bound by residues Arg-305, 331–333, and 413–415; these read KLD and STS.

It belongs to the adenylosuccinate synthetase family. Homodimer. It depends on Mg(2+) as a cofactor.

The protein resides in the cytoplasm. The catalysed reaction is IMP + L-aspartate + GTP = N(6)-(1,2-dicarboxyethyl)-AMP + GDP + phosphate + 2 H(+). It participates in purine metabolism; AMP biosynthesis via de novo pathway; AMP from IMP: step 1/2. In terms of biological role, plays an important role in the de novo pathway of purine nucleotide biosynthesis. Catalyzes the first committed step in the biosynthesis of AMP from IMP. In Methylobacterium nodulans (strain LMG 21967 / CNCM I-2342 / ORS 2060), this protein is Adenylosuccinate synthetase.